Consider the following 433-residue polypeptide: GTPase Der (433 aa).

2 EngA-type G domains span residues 3 to 167 (KIVS…DKNI) and 175 to 349 (PRIA…FNLR). Residues 9 to 16 (GRPNVGKS), 56 to 60 (DTGGY), 119 to 122 (NKID), 181 to 188 (GRPNVGKS), 228 to 232 (DTAGI), and 293 to 296 (NKWD) each bind GTP. The KH-like domain maps to 350–433 (LRIKTSLLNK…IPIKILFRLK (84 aa)).

Belongs to the TRAFAC class TrmE-Era-EngA-EngB-Septin-like GTPase superfamily. EngA (Der) GTPase family. As to quaternary structure, associates with the 50S ribosomal subunit.

GTPase that plays an essential role in the late steps of ribosome biogenesis. The polypeptide is GTPase Der (Karelsulcia muelleri (strain GWSS) (Sulcia muelleri)).